The chain runs to 233 residues: Purine nucleoside phosphorylase DeoD-type (233 aa).

His-4 lines the a purine D-ribonucleoside pocket. Residues Gly-20, Arg-24, Arg-43, and 87–90 contribute to the phosphate site; that span reads RIGT. A purine D-ribonucleoside is bound by residues 179-181 and 203-204; these read EME and SD. Residue Asp-204 is the Proton donor of the active site.

It belongs to the PNP/UDP phosphorylase family. Homohexamer; trimer of homodimers.

It carries out the reaction a purine D-ribonucleoside + phosphate = a purine nucleobase + alpha-D-ribose 1-phosphate. The enzyme catalyses a purine 2'-deoxy-D-ribonucleoside + phosphate = a purine nucleobase + 2-deoxy-alpha-D-ribose 1-phosphate. In terms of biological role, catalyzes the reversible phosphorolytic breakdown of the N-glycosidic bond in the beta-(deoxy)ribonucleoside molecules, with the formation of the corresponding free purine bases and pentose-1-phosphate. The chain is Purine nucleoside phosphorylase DeoD-type from Helicobacter pylori (strain J99 / ATCC 700824) (Campylobacter pylori J99).